A 132-amino-acid chain; its full sequence is MAEEGISAGGVMDVNTALQEVLKTALIHDGLARGIREAAKALDKRQAHLCVLASNCDEPMYVKLVEALCAEPQINLIKVDDNKKLGEWVGLCKIDREGKPRKVVGCSCVVVKDYGKESQAKDVIEEYFKIKK.

The protein belongs to the eukaryotic ribosomal protein eS12 family.

It is found in the cytoplasm. The protein is Small ribosomal subunit protein eS12 (rps12) of Xenopus laevis (African clawed frog).